The chain runs to 68 residues: Protein SlyX homolog (68 aa).

It belongs to the SlyX family.

This is Protein SlyX homolog from Brucella suis (strain ATCC 23445 / NCTC 10510).